Reading from the N-terminus, the 428-residue chain is YTH domain-containing protein ECT1 (428 aa).

One can recognise a YTH domain in the interval 245–382; the sequence is AKFFVIKSYS…EHGTKIIKIF (138 aa). Residues 251–253, D257, 267–268, N300, W324, W329, and W337 each bind RNA; these read KSY and WS.

Interacts (via C-terminus) with CIPK1. Expressed in root apex, shoot apex, lateral root primordia, stamens, carpels and trichomes.

The protein localises to the nucleus. It is found in the cytoplasm. In terms of biological role, specifically recognizes and binds N6-methyladenosine (m6A)-containing RNAs, and regulates mRNA stability. M6A is a modification present at internal sites of mRNAs and some non-coding RNAs and plays a role in mRNA stability and processing. The polypeptide is YTH domain-containing protein ECT1 (Arabidopsis thaliana (Mouse-ear cress)).